We begin with the raw amino-acid sequence, 85 residues long: UPF0473 protein CPR_1590 (85 aa).

This sequence belongs to the UPF0473 family.

In Clostridium perfringens (strain SM101 / Type A), this protein is UPF0473 protein CPR_1590.